A 674-amino-acid polypeptide reads, in one-letter code: MDKAKAQQEIGKLRAEIERHNRLYYLEAKPEISDFEFDKLLERLIALETEFPELVTPDSPSQRVGGGITKEFPTVIHREPMLSLSNTYSIGEVSDFCTRVEKLVAAEGGGTPEYVAELKYDGVAISLFYRDGLLVRGSTRGDGRQGDEITANLKTIPSIPLRLQSAGGSLFDAAVNGEVEVRGEVYMRKDDFERLNEERPEEERFANPRNATAGTLKLQDSAEVARRRMSFVAYYLKGHDGEAPTHLRRLEQLKCMGFMTGAAARLCKGMDEIANFIGEWSEKRWTLPYETDGVVLKLNEVGLWDRLGATAKSPRWAIAYKYPAQQAKTVLQGVVFQVGRLGTITPVAELKPTKLAGSTVSRSTLHNFDEIERLGVRIGDHVMIEKSGEVIPKVVSVVLDERPAETAEIEAPSECPVCGTKLERHEGEVSWYCPNEEGCPAQKRGRILHFASRNALDIQNLGESLVSQLVERGFVSDAGDLYSLTQEQLASLDRMAAKSAQNVLDALEKSKKQSYARLLFALGIRHVGAATARELAHACPSIDRLREMGEEELAAVPDIGPVIAASIRDFFAKPWVAAMLEKLAAAGLPMQAGEEKALVNTNFEGQSVIFTGGLERHVRQQAEEMVRERGGKIVSSVSKKTTLVVAGKEAGSKLEKAMKLGVRVIDEDEFERML.

NAD(+)-binding positions include 34–38, 83–84, and E117; these read DFEFD and SL. Residue K119 is the N6-AMP-lysine intermediate of the active site. NAD(+) contacts are provided by R140, E184, K297, and K321. The Zn(2+) site is built by C415, C418, C433, and C439. The region spanning 598–674 is the BRCT domain; the sequence is LVNTNFEGQS…IDEDEFERML (77 aa).

Belongs to the NAD-dependent DNA ligase family. LigA subfamily. Mg(2+) serves as cofactor. Requires Mn(2+) as cofactor.

The enzyme catalyses NAD(+) + (deoxyribonucleotide)n-3'-hydroxyl + 5'-phospho-(deoxyribonucleotide)m = (deoxyribonucleotide)n+m + AMP + beta-nicotinamide D-nucleotide.. In terms of biological role, DNA ligase that catalyzes the formation of phosphodiester linkages between 5'-phosphoryl and 3'-hydroxyl groups in double-stranded DNA using NAD as a coenzyme and as the energy source for the reaction. It is essential for DNA replication and repair of damaged DNA. This is DNA ligase from Chlorobaculum parvum (strain DSM 263 / NCIMB 8327) (Chlorobium vibrioforme subsp. thiosulfatophilum).